We begin with the raw amino-acid sequence, 150 residues long: MKLILTAAVENLGVAGDIVEVKNGYGRNLLLPRGLAIVATPGAEKQIEGIKRAQEAREIRDLDHAREVKAALEALEGVTIAVRTSESGKLFGSVKTDDIVDAVKAAGGPNLDKRAIVLPKNLVKTTGKYQVEAKLTDGIVSRVKFEVVAA.

Belongs to the bacterial ribosomal protein bL9 family.

Its function is as follows. Binds to the 23S rRNA. This is Large ribosomal subunit protein bL9 from Corynebacterium glutamicum (strain R).